Consider the following 293-residue polypeptide: DOMON domain-containing protein FRRS1L (293 aa).

The signal sequence occupies residues 1–28 (MAGQPLRRPAWVPLLLRLLLAGIAACDA). A disordered region spans residues 29-60 (SPADDSAGPGGRGPRGRARGDAGADEAVPRHD). The span at 46–60 (ARGDAGADEAVPRHD) shows a compositional bias: basic and acidic residues. One can recognise a DOMON domain in the interval 119–234 (CDYFLSYRMI…WYYLFAWGPA (116 aa)). The chain crosses the membrane as a helical span at residues 271–291 (TFSSPFCLLLIVALTFYLLMG).

As to quaternary structure, component of the outer core of AMPAR complex. AMPAR complex consists of an inner core made of 4 pore-forming GluA/GRIA proteins (GRIA1, GRIA2, GRIA3 and GRIA4) and 4 major auxiliary subunits arranged in a twofold symmetry. One of the two pairs of distinct binding sites is occupied either by CNIH2, CNIH3 or CACNG2, CACNG3. The other harbors CACNG2, CACNG3, CACNG4, CACNG8 or GSG1L. This inner core of AMPAR complex is complemented by outer core constituents binding directly to the GluA/GRIA proteins at sites distinct from the interaction sites of the inner core constituents. Outer core constituents include at least PRRT1, PRRT2, CKAMP44/SHISA9, FRRS1L and NRN1. The proteins of the inner and outer core serve as a platform for other, more peripherally associated AMPAR constituents. Alone or in combination, these auxiliary subunits control the gating and pharmacology of the AMPAR complex and profoundly impact their biogenesis and protein processing. As to expression, expressed in the brain (at protein level). In embryos expression is evident in the ventral forebrain, but a lower level is seen in the remainder of the embryos. In the adult brain, expressed in the cortex, cerebellum, hippocampus and basal ganglia.

The protein resides in the cell membrane. Its subcellular location is the synapse. Its function is as follows. Important modulator of glutamate signaling pathway. The protein is DOMON domain-containing protein FRRS1L (Frrs1l) of Mus musculus (Mouse).